The following is a 592-amino-acid chain: MAFMRLGSKSEAFHREGQTWLCTTGLVSDVTIEVGDMKFHLHKFPLLSRSGLLERLIEESSTDDGSGCVLSLDEIPGGGKTFELVTKFCYGVKIELTAFNVVSLRCAAEYLEMTDNYGEGNLVGMTETFLNEVFGNWTDSIKALQTCEEVIDYAEDLHIISRCVDSLAVKACADPSLFNWPVGGGKNATSGQNTEDESHLWNGISASGKMLQHTGEDWWFDDASFLSLPLFKRLITAIEARGMKLENIAMAVMYYTRKHVPLMNRQVNMDEQVIETPNPSEEDQKTCLEEIVGLLPSKKGVNPTKFLLRLLQTAMVLHASQSSRENLERRIGNQLDQAALVDLLIPNMGYSETLYDVECVLRMIEQFVSSTEQAGIVPSPCIIEEGHLVKDGADLLTPTTLVATLVDGYLAEVAPDVNLKLAKFEAIAAAIPDYARPLDDGVYHAIDVYLKAHPWITDSEREHICRLMNCQKLSLEASTHAAQNERLPLRVIVQVLFFEQLRLRTSVSGWFFVSENLDNPDNQHGANGGLLKPRGENVRERVSELEKECMNMKQELHKLVRTKRSWKNFTRKLNFKKKSECCKPKDQATPAI.

The region spanning 28–98 (SDVTIEVGDM…CYGVKIELTA (71 aa)) is the BTB domain. The NPH3 domain occupies 217 to 502 (DWWFDDASFL…VQVLFFEQLR (286 aa)). The residue at position 443 (tyrosine 443) is a Phosphotyrosine.

It belongs to the NPH3 family.

The protein operates within protein modification; protein ubiquitination. May act as a substrate-specific adapter of an E3 ubiquitin-protein ligase complex (CUL3-RBX1-BTB) which mediates the ubiquitination and subsequent proteasomal degradation of target proteins. The sequence is that of BTB/POZ domain-containing protein At5g03250 from Arabidopsis thaliana (Mouse-ear cress).